The following is a 171-amino-acid chain: ATP synthase subunit b (171 aa).

The helical transmembrane segment at 3–23 threads the bilayer; sequence KFLFFIFVFVGISFAGDDTAT.

It belongs to the ATPase B chain family. As to quaternary structure, F-type ATPases have 2 components, F(1) - the catalytic core - and F(0) - the membrane proton channel. F(1) has five subunits: alpha(3), beta(3), gamma(1), delta(1), epsilon(1). F(0) has three main subunits: a(1), b(2) and c(10-14). The alpha and beta chains form an alternating ring which encloses part of the gamma chain. F(1) is attached to F(0) by a central stalk formed by the gamma and epsilon chains, while a peripheral stalk is formed by the delta and b chains.

It localises to the cell inner membrane. Functionally, f(1)F(0) ATP synthase produces ATP from ADP in the presence of a proton or sodium gradient. F-type ATPases consist of two structural domains, F(1) containing the extramembraneous catalytic core and F(0) containing the membrane proton channel, linked together by a central stalk and a peripheral stalk. During catalysis, ATP synthesis in the catalytic domain of F(1) is coupled via a rotary mechanism of the central stalk subunits to proton translocation. Its function is as follows. Component of the F(0) channel, it forms part of the peripheral stalk, linking F(1) to F(0). The chain is ATP synthase subunit b from Campylobacter hominis (strain ATCC BAA-381 / DSM 21671 / CCUG 45161 / LMG 19568 / NCTC 13146 / CH001A).